The sequence spans 483 residues: Putative (R)-citramalate synthase CimA (483 aa).

The region spanning 1–245 is the Pyruvate carboxyltransferase domain; the sequence is MRDGEQTPGV…DTGIKHEQIY (245 aa).

The protein belongs to the alpha-IPM synthase/homocitrate synthase family. Homodimer.

The enzyme catalyses pyruvate + acetyl-CoA + H2O = (3R)-citramalate + CoA + H(+). It participates in amino-acid biosynthesis; L-isoleucine biosynthesis; 2-oxobutanoate from pyruvate: step 1/3. Functionally, catalyzes the condensation of pyruvate and acetyl-coenzyme A to form (R)-citramalate. The sequence is that of Putative (R)-citramalate synthase CimA from Methanosarcina mazei (strain ATCC BAA-159 / DSM 3647 / Goe1 / Go1 / JCM 11833 / OCM 88) (Methanosarcina frisia).